The following is a 248-amino-acid chain: Probable phosphatase VF_A0065 (248 aa).

Zn(2+)-binding residues include H8, H10, H16, H41, E74, H102, H132, D194, and H196.

This sequence belongs to the PHP family. The cofactor is Zn(2+).

The chain is Probable phosphatase VF_A0065 from Aliivibrio fischeri (strain ATCC 700601 / ES114) (Vibrio fischeri).